A 385-amino-acid chain; its full sequence is Chaperone protein DnaJ (385 aa).

The region spanning 5-70 (DYYEILEITR…SKRQIYDKYG (66 aa)) is the J domain. The segment at 136-213 (GCKKEIHNSF…CKGSGFEISE (78 aa)) adopts a CR-type zinc-finger fold. Residues Cys149, Cys152, Cys165, Cys168, Cys187, Cys190, Cys201, and Cys204 each coordinate Zn(2+). CXXCXGXG motif repeat units follow at residues 149 to 156 (CSDCKGTG), 165 to 172 (CKDCGGKG), 187 to 194 (CPTCKGEG), and 201 to 208 (CSKCKGSG).

It belongs to the DnaJ family. As to quaternary structure, homodimer. Zn(2+) is required as a cofactor.

The protein localises to the cytoplasm. Its function is as follows. Participates actively in the response to hyperosmotic and heat shock by preventing the aggregation of stress-denatured proteins and by disaggregating proteins, also in an autonomous, DnaK-independent fashion. Unfolded proteins bind initially to DnaJ; upon interaction with the DnaJ-bound protein, DnaK hydrolyzes its bound ATP, resulting in the formation of a stable complex. GrpE releases ADP from DnaK; ATP binding to DnaK triggers the release of the substrate protein, thus completing the reaction cycle. Several rounds of ATP-dependent interactions between DnaJ, DnaK and GrpE are required for fully efficient folding. Also involved, together with DnaK and GrpE, in the DNA replication of plasmids through activation of initiation proteins. The polypeptide is Chaperone protein DnaJ (Helicobacter hepaticus (strain ATCC 51449 / 3B1)).